Reading from the N-terminus, the 484-residue chain is Acetaldehyde dehydrogenase (acetylating) (484 aa).

The protein belongs to the aldehyde dehydrogenase family.

The catalysed reaction is acetaldehyde + NAD(+) + CoA = acetyl-CoA + NADH + H(+). It participates in organosulfur degradation; alkanesulfonate degradation. Its function is as follows. Involved in an anaerobic respiration pathway that converts the sulfonate taurine (2-aminoethanesulfonate) to ammonia, acetate and sulfide. Catalyzes the oxidation of acetaldehyde to acetyl-CoA in the presence of CoASH and NAD(+). Highly prefers NAD(+) over NADP(+). The protein is Acetaldehyde dehydrogenase (acetylating) of Bilophila wadsworthia (strain 3_1_6).